We begin with the raw amino-acid sequence, 284 residues long: Aquaporin NIP1-1 (284 aa).

The span at 1–12 (MAGGDNNSQTTN) shows a compositional bias: polar residues. Residues 1–28 (MAGGDNNSQTTNGGSGHEQRAMEEGRKQ) are disordered. Over residues 17–28 (HEQRAMEEGRKQ) the composition is skewed to basic and acidic residues. The next 2 helical transmembrane spans lie at 50-70 (IIAE…AVTI) and 78-98 (ITFP…VYAV). Positions 107-109 (NPA) match the NPA 1 motif. 3 helical membrane-spanning segments follow: residues 129 to 149 (AAAQ…MFGG), 166 to 186 (SLVL…GVAT), and 194 to 214 (LAGL…GPIS). Positions 219–221 (NPA) match the NPA 2 motif. A helical transmembrane segment spans residues 236-256 (IWVYIVGPVAGAVAGAWAYNI).

It belongs to the MIP/aquaporin (TC 1.A.8) family. NIP (TC 1.A.8.12) subfamily. As to expression, expressed in leaves and at lower levels in roots and anthers.

Its subcellular location is the membrane. Aquaporins facilitate the transport of water and small neutral solutes across cell membranes. In Oryza sativa subsp. japonica (Rice), this protein is Aquaporin NIP1-1 (NIP1-1).